We begin with the raw amino-acid sequence, 205 residues long: HTH-type transcriptional regulator LuxR (205 aa).

One can recognise an HTH tetR-type domain in the interval 15 to 75 (LKRKQQLMEI…EVLNHVVRQF (61 aa)). The segment at residues 39 to 58 (HADIAEIAQVSVATVFNYFP) is a DNA-binding region (H-T-H motif).

In terms of biological role, regulatory protein of bacterial bioluminescence. It probably binds the autoinducer molecule and potentiates the transcription of the bioluminescence operon. This Vibrio harveyi (Beneckea harveyi) protein is HTH-type transcriptional regulator LuxR (luxR).